Consider the following 207-residue polypeptide: Urease accessory protein UreE (207 aa).

Positions 170 to 194 (EHHGHSHSHSHDHDHDHDHDHDHQH) are enriched in basic and acidic residues. A disordered region spans residues 170-207 (EHHGHSHSHSHDHDHDHDHDHDHQHGPCCSHGHHHGHR).

It belongs to the UreE family.

The protein localises to the cytoplasm. Its function is as follows. Involved in urease metallocenter assembly. Binds nickel. Probably functions as a nickel donor during metallocenter assembly. The chain is Urease accessory protein UreE from Burkholderia pseudomallei (strain 1106a).